A 135-amino-acid chain; its full sequence is Probable transporter XF_0766 (135 aa).

The next 4 membrane-spanning stretches (helical) occupy residues 4 to 24 (YWYPILGGILLGLSTVMLLLL), 45 to 65 (AQDIPFVVGLVLGPLVFSVIF), 71 to 91 (VTVAATWPTIIVAGLLVGLGT), and 114 to 134 (IVATAIFLISGMATATFMGVY).

The protein belongs to the TsuA/YedE (TC 9.B.102) family.

It is found in the cell inner membrane. The protein is Probable transporter XF_0766 of Xylella fastidiosa (strain 9a5c).